The following is a 73-amino-acid chain: UPF0435 protein OB1527 (73 aa).

This sequence belongs to the UPF0435 family.

This is UPF0435 protein OB1527 from Oceanobacillus iheyensis (strain DSM 14371 / CIP 107618 / JCM 11309 / KCTC 3954 / HTE831).